The chain runs to 402 residues: Multidrug resistance protein MdtH (402 aa).

The Cytoplasmic portion of the chain corresponds to 1 to 12; the sequence is MSRVSQARNLGK. A helical membrane pass occupies residues 13–33; it reads YFLLIDNMLVVLGFFVVFPLI. At 34–98 the chain is on the periplasmic side; that stretch reads SIRFVDQMGW…GFATMGIAHE (65 aa). A helical membrane pass occupies residues 99–116; sequence PWLLWFSCLLSGLGGTLF. The Cytoplasmic portion of the chain corresponds to 117-138; the sequence is DPPRSALVVKLIRPQQRCRFFS. A helical membrane pass occupies residues 139–159; it reads LLMMQDSAGAVIGALLGSWLL. The Periplasmic segment spans residues 160–164; sequence QYDFR. Residues 165-185 form a helical membrane-spanning segment; that stretch reads LVCATGAVLFVLCAAFNAWLL. Residues 186–213 are Cytoplasmic-facing; sequence PAWKLSTVRTPVREGMTRVMRDKRFVTY. The chain crosses the membrane as a helical span at residues 214–234; sequence VLTLAGYYMLAVQVMLMLPIM. Residues 235–243 are Periplasmic-facing; that stretch reads VNDVAGAPS. Residues 244-264 traverse the membrane as a helical segment; it reads AVKWMYAIEACLSLTLLYPIA. At 265–276 the chain is on the cytoplasmic side; that stretch reads RWSEKHFRLEHR. A helical membrane pass occupies residues 277-297; sequence LMAGLLIMSLSMMPVGMVSGL. Residues 298 to 299 are Periplasmic-facing; it reads QQ. The helical transmembrane segment at 300-320 threads the bilayer; that stretch reads LFTLICLFYIGSIIAEPARET. Residues 321–339 lie on the Cytoplasmic side of the membrane; sequence LSALLADARARGSYMGFSR. A helical membrane pass occupies residues 340–360; that stretch reads LGLAIGGAIGYIGGGWLFDLG. At 361–367 the chain is on the periplasmic side; the sequence is KSAHQPE. The chain crosses the membrane as a helical span at residues 368 to 388; the sequence is LPWMMLGIIGIFTFLALGWQF. Residues 389-402 lie on the Cytoplasmic side of the membrane; the sequence is SQKRATRRLLERDA.

The protein belongs to the major facilitator superfamily. DHA1 family. MdtH (TC 2.A.1.2.21) subfamily.

Its subcellular location is the cell inner membrane. This Shigella sonnei (strain Ss046) protein is Multidrug resistance protein MdtH.